The chain runs to 354 residues: Alkanal monooxygenase alpha chain (354 aa).

This sequence belongs to the bacterial luciferase oxidoreductase family. Heterodimer of an alpha and a beta chain.

The catalysed reaction is a long-chain fatty aldehyde + FMNH2 + O2 = a long-chain fatty acid + hnu + FMN + H2O + 2 H(+). Light-emitting reaction in luminous bacteria. The protein is Alkanal monooxygenase alpha chain (luxA) of Aliivibrio fischeri (Vibrio fischeri).